Consider the following 317-residue polypeptide: Ribosomal protein L11 methyltransferase (317 aa).

S-adenosyl-L-methionine-binding residues include threonine 158, glycine 179, aspartate 201, and asparagine 244.

The protein belongs to the methyltransferase superfamily. PrmA family.

It localises to the cytoplasm. It catalyses the reaction L-lysyl-[protein] + 3 S-adenosyl-L-methionine = N(6),N(6),N(6)-trimethyl-L-lysyl-[protein] + 3 S-adenosyl-L-homocysteine + 3 H(+). Its function is as follows. Methylates ribosomal protein L11. The chain is Ribosomal protein L11 methyltransferase from Streptococcus thermophilus (strain CNRZ 1066).